The primary structure comprises 314 residues: tRNA dimethylallyltransferase (314 aa).

13–20 (GPTAVGKT) is an ATP binding site. 15–20 (TAVGKT) lines the substrate pocket. The tract at residues 38–41 (DSMQ) is interaction with substrate tRNA.

This sequence belongs to the IPP transferase family. In terms of assembly, monomer. The cofactor is Mg(2+).

The enzyme catalyses adenosine(37) in tRNA + dimethylallyl diphosphate = N(6)-dimethylallyladenosine(37) in tRNA + diphosphate. Catalyzes the transfer of a dimethylallyl group onto the adenine at position 37 in tRNAs that read codons beginning with uridine, leading to the formation of N6-(dimethylallyl)adenosine (i(6)A). The sequence is that of tRNA dimethylallyltransferase from Bacillus subtilis (strain 168).